The primary structure comprises 280 residues: Retinoschisin (280 aa).

The first 23 residues, 1–23, serve as a signal peptide directing secretion; sequence MHLPREAFLLALAGAFIFPSSQQ. In terms of domain architecture, F5/8 type C spans 119–275; that stretch reads CPYHRPLGFE…IALRLELLLC (157 aa). 2 cysteine pairs are disulfide-bonded: Cys-119–Cys-275 and Cys-166–Cys-198.

Homooctamer of 4 homodimers; disulfide-linked. The homooctamer has a flat, cogwheel structure with a diameter of about 14 nm. Two stacked octamers can assemble to form a hexadecamer.

It localises to the secreted. The protein resides in the cell membrane. Its function is as follows. Binds negatively charged membrane lipids, such as phosphatidylserine and phosphoinositides. May play a role in cell-cell adhesion processes in the retina, via homomeric interaction between octamers present on the surface of two neighboring cells. Required for normal structure and function of the retina. The chain is Retinoschisin (xlrs1) from Takifugu rubripes (Japanese pufferfish).